Here is a 362-residue protein sequence, read N- to C-terminus: tRNA/tmRNA (uracil-C(5))-methyltransferase (362 aa).

5 residues coordinate S-adenosyl-L-methionine: Q186, Y214, N219, E235, and D295. The active-site Nucleophile is C320. E354 functions as the Proton acceptor in the catalytic mechanism.

It belongs to the class I-like SAM-binding methyltransferase superfamily. RNA M5U methyltransferase family. TrmA subfamily.

It carries out the reaction uridine(54) in tRNA + S-adenosyl-L-methionine = 5-methyluridine(54) in tRNA + S-adenosyl-L-homocysteine + H(+). The enzyme catalyses uridine(341) in tmRNA + S-adenosyl-L-methionine = 5-methyluridine(341) in tmRNA + S-adenosyl-L-homocysteine + H(+). Functionally, dual-specificity methyltransferase that catalyzes the formation of 5-methyluridine at position 54 (m5U54) in all tRNAs, and that of position 341 (m5U341) in tmRNA (transfer-mRNA). In Dechloromonas aromatica (strain RCB), this protein is tRNA/tmRNA (uracil-C(5))-methyltransferase.